Reading from the N-terminus, the 372-residue chain is Actin-related protein 2/3 complex subunit 1B (372 aa).

WD repeat units lie at residues 6 to 45 (FLVEPISCHAWNKDRTQIAICPNNHEVHIYEKSGAKWTKV), 50 to 89 (EHNGQVTGIDWAPESNRIVTCGTDRNAYVWTLKGRTWKPT), 94 to 135 (RINR…WVCK), 140 to 179 (PIRSTVLSLDWHPNNVLLAAGSCDFKCRIFSAYIKEVEER), 242 to 280 (SETLPLLALTFITDNSLVAAGHDCFPVLFTYDAAAGMLS), and 324 to 367 (LHKN…SALK).

It belongs to the WD repeat ARPC1 family. As to quaternary structure, component of the Arp2/3 complex composed of ACTR2/ARP2, ACTR3/ARP3, ARPC1B/p41-ARC, ARPC2/p34-ARC, ARPC3/p21-ARC, ARPC4/p20-ARC and ARPC5/p16-ARC.

The protein localises to the cytoplasm. It is found in the cytoskeleton. It localises to the nucleus. Its function is as follows. Component of the Arp2/3 complex, a multiprotein complex that mediates actin polymerization upon stimulation by nucleation-promoting factor (NPF). The Arp2/3 complex mediates the formation of branched actin networks in the cytoplasm, providing the force for cell motility. In addition to its role in the cytoplasmic cytoskeleton, the Arp2/3 complex also promotes actin polymerization in the nucleus, thereby regulating gene transcription and repair of damaged DNA. The Arp2/3 complex promotes homologous recombination (HR) repair in response to DNA damage by promoting nuclear actin polymerization, leading to drive motility of double-strand breaks (DSBs). This chain is Actin-related protein 2/3 complex subunit 1B, found in Homo sapiens (Human).